A 535-amino-acid polypeptide reads, in one-letter code: Dual specificity calcium/calmodulin-dependent 3',5'-cyclic nucleotide phosphodiesterase 1A (535 aa).

Calmodulin-binding stretches follow at residues 24–44 and 114–137; these read TEKM…QLER and EKPK…MYRK. One can recognise a PDEase domain in the interval 142–522; sequence VGLAYPAAVI…ERWKELAAQE (381 aa). The Proton donor role is filled by H219. 4 residues coordinate Zn(2+): H223, H259, D260, and D366. Position 260 (D260) interacts with Mg(2+).

Belongs to the cyclic nucleotide phosphodiesterase family. PDE1 subfamily. As to quaternary structure, homodimer. Interacts with YWHAZ. The cofactor is Zn(2+). It depends on Mg(2+) as a cofactor. Several tissues, including brain, kidney, testes and heart.

It carries out the reaction a nucleoside 3',5'-cyclic phosphate + H2O = a nucleoside 5'-phosphate + H(+). The catalysed reaction is 3',5'-cyclic GMP + H2O = GMP + H(+). It catalyses the reaction 3',5'-cyclic AMP + H2O = AMP + H(+). Its activity is regulated as follows. Type I PDE are activated by the binding of calmodulin in the presence of Ca(2+). In terms of biological role, calcium/calmodulin-dependent cyclic nucleotide phosphodiesterase with a dual specificity for the second messengers cGMP and cAMP, which are key regulators of many important physiological processes. Has a higher efficiency with cGMP compared to cAMP. The polypeptide is Dual specificity calcium/calmodulin-dependent 3',5'-cyclic nucleotide phosphodiesterase 1A (Homo sapiens (Human)).